A 225-amino-acid polypeptide reads, in one-letter code: Peptidyl-tRNA hydrolase (225 aa).

Position 27 (tyrosine 27) interacts with tRNA. Histidine 32 acts as the Proton acceptor in catalysis. Residues tyrosine 78, asparagine 80, and asparagine 126 each contribute to the tRNA site. The tract at residues 198-225 (FNPLDFSGPDRQDQPAPLNPAKTAPGES) is disordered.

It belongs to the PTH family. In terms of assembly, monomer.

The protein resides in the cytoplasm. It catalyses the reaction an N-acyl-L-alpha-aminoacyl-tRNA + H2O = an N-acyl-L-amino acid + a tRNA + H(+). In terms of biological role, hydrolyzes ribosome-free peptidyl-tRNAs (with 1 or more amino acids incorporated), which drop off the ribosome during protein synthesis, or as a result of ribosome stalling. Catalyzes the release of premature peptidyl moieties from peptidyl-tRNA molecules trapped in stalled 50S ribosomal subunits, and thus maintains levels of free tRNAs and 50S ribosomes. In Synechococcus sp. (strain JA-3-3Ab) (Cyanobacteria bacterium Yellowstone A-Prime), this protein is Peptidyl-tRNA hydrolase.